Consider the following 411-residue polypeptide: Envelope glycoprotein G (411 aa).

The first 19 residues, 1–19 (MLTVLAALSLLSLLTSATG), serve as a signal peptide directing secretion. N-linked (GlcNAc...) asparagine; by host glycosylation is found at asparagine 83, asparagine 138, asparagine 222, asparagine 245, and asparagine 317. Polar residues-rich tracts occupy residues 306-327 (VPSS…SNSP) and 334-345 (SVNSDDSTHTGG). A disordered region spans residues 306–345 (VPSSAAESSLENQSTQEESNSPEVAHLRSVNSDDSTHTGG). Residues 363 to 379 (CLALIGLGTCAMIGLIV) traverse the membrane as a helical segment. N-linked (GlcNAc...) asparagine; by host glycosylation occurs at asparagine 392.

The protein belongs to the alphaherpesvirinae glycoprotein G family.

Its subcellular location is the virion membrane. Its function is as follows. Chemokine-binding protein that inhibits neutrophils' chemotaxis. The sequence is that of Envelope glycoprotein G (gG) from Equus caballus (Horse).